We begin with the raw amino-acid sequence, 94 residues long: Large ribosomal subunit protein uL23 (94 aa).

Belongs to the universal ribosomal protein uL23 family. Part of the 50S ribosomal subunit. Contacts protein L29, and trigger factor when it is bound to the ribosome.

One of the early assembly proteins it binds 23S rRNA. One of the proteins that surrounds the polypeptide exit tunnel on the outside of the ribosome. Forms the main docking site for trigger factor binding to the ribosome. The sequence is that of Large ribosomal subunit protein uL23 from Ligilactobacillus salivarius (strain UCC118) (Lactobacillus salivarius).